Here is a 407-residue protein sequence, read N- to C-terminus: Putative serine/threonine-protein kinase C01C4.3 (407 aa).

Over residues 33 to 57 the composition is skewed to polar residues; that stretch reads NQLQNHPPRNATQSPQRQPRTSESS. The segment at 33–68 is disordered; the sequence is NQLQNHPPRNATQSPQRQPRTSESSMDFPRSALRRN. The 272-residue stretch at 126–397 folds into the Protein kinase domain; the sequence is YTVNKQLGTG…RKCLAKEKLL (272 aa). ATP-binding positions include 132–140 and lysine 155; that span reads LGTGRFGFI. The Proton acceptor role is filled by asparagine 251.

The protein belongs to the protein kinase superfamily. Ser/Thr protein kinase family.

The catalysed reaction is L-seryl-[protein] + ATP = O-phospho-L-seryl-[protein] + ADP + H(+). It catalyses the reaction L-threonyl-[protein] + ATP = O-phospho-L-threonyl-[protein] + ADP + H(+). The sequence is that of Putative serine/threonine-protein kinase C01C4.3 from Caenorhabditis elegans.